Consider the following 634-residue polypeptide: SPARC-like protein 1 (634 aa).

The first 16 residues, 1–16 (MKAVLLLLYALGIAAA), serve as a signal peptide directing secretion. Residues 50–335 (ADIEKHPNHK…DDSKHGASDD (286 aa)) are disordered. Basic and acidic residues predominate over residues 51–62 (DIEKHPNHKAEK). Ser-68, Ser-76, and Ser-84 each carry phosphoserine. Residues 73–83 (HEQSTEQDKTY) show a composition bias toward basic and acidic residues. The segment covering 89 to 99 (LKDEEDGDGDL) has biased composition (acidic residues). The segment covering 131-144 (TVSTPFVDSDQPAN) has biased composition (polar residues). An N-linked (GlcNAc...) asparagine glycan is attached at Asn-144. Phosphoserine is present on residues Ser-151 and Ser-159. Acidic residues-rich tracts occupy residues 189–198 (EKEEEEDPED) and 205–214 (NQEEEKEPPE). A compositionally biased stretch (polar residues) spans 233 to 258 (QESSQPTQISKTKNDFEQGSQGQEGD). Ser-259 carries the post-translational modification Phosphoserine. Basic and acidic residues-rich tracts occupy residues 263–276 (GEDK…HLPH) and 292–303 (GNRKDTDEEKAV). Ser-333 and Ser-340 each carry phosphoserine. A disordered region spans residues 360–398 (EETPDESENRSEAGDNQGAKKAESSPNAEPSDEGNSRGH). Residues 366 to 382 (SENRSEAGDNQGAKKAE) show a composition bias toward basic and acidic residues. An N-linked (GlcNAc...) asparagine glycan is attached at Asn-368. Phosphoserine occurs at positions 370 and 390. The region spanning 402–424 (SCMNFQCKRGHTCKTDQHGKPHC) is the Follistatin-like domain. 7 disulfide bridges follow: Cys-403–Cys-414, Cys-408–Cys-424, Cys-426–Cys-460, Cys-432–Cys-453, Cys-442–Cys-479, Cys-485–Cys-596, and Cys-604–Cys-620. The region spanning 420 to 481 (GKPHCVCQDP…QLDYFGACKS (62 aa)) is the Kazal-like domain. Asn-446 carries an N-linked (GlcNAc...) asparagine glycan. An EF-hand domain is found at 592–627 (PMEHCITRFFEECDPNKDKHITLKEWGHCFGIKEED). Ca(2+) contacts are provided by Asp-605, Asn-607, Asp-609, His-611, and Glu-616.

This sequence belongs to the SPARC family. As to expression, expressed in many types of neurons in the brain.

Its subcellular location is the secreted. It localises to the extracellular space. It is found in the extracellular matrix. The protein is SPARC-like protein 1 (Sparcl1) of Rattus norvegicus (Rat).